A 304-amino-acid polypeptide reads, in one-letter code: ATP phosphoribosyltransferase (304 aa).

Belongs to the ATP phosphoribosyltransferase family.

It is found in the cytoplasm. The enzyme catalyses 1-(5-phospho-beta-D-ribosyl)-ATP + diphosphate = 5-phospho-alpha-D-ribose 1-diphosphate + ATP. It functions in the pathway amino-acid biosynthesis; L-histidine biosynthesis; L-histidine from 5-phospho-alpha-D-ribose 1-diphosphate: step 1/9. Its function is as follows. Catalyzes the condensation of ATP and 5-phosphoribose 1-diphosphate to form N'-(5'-phosphoribosyl)-ATP (PR-ATP). Has a crucial role in the pathway because the rate of histidine biosynthesis seems to be controlled primarily by regulation of the enzymatic activity. The polypeptide is ATP phosphoribosyltransferase (HIS1) (Debaryomyces hansenii (strain ATCC 36239 / CBS 767 / BCRC 21394 / JCM 1990 / NBRC 0083 / IGC 2968) (Yeast)).